The primary structure comprises 1101 residues: Furin-like protease 1, isoform 1-CRR (1101 aa).

Positions 1–57 (MKNDVVRWSRQPTSNTTNSSSSSRSDSNSTHKHRSKSNKLNARQLGSNAARSCQQRS) are disordered. Over residues 13–28 (TSNTTNSSSSSRSDSN) the composition is skewed to low complexity. Asn15, Asn18, and Asn28 each carry an N-linked (GlcNAc...) asparagine glycan. Residues 38-57 (NKLNARQLGSNAARSCQQRS) show a composition bias toward polar residues. Asn108 carries an N-linked (GlcNAc...) asparagine glycan. Residues 119 to 139 (VFLLALQFSAVVFLCNINVGF) form a helical membrane-spanning segment. Residues 150–163 (SAGGSSPAAPSSAP) show a composition bias toward low complexity. The segment at 150-187 (SAGGSSPAAPSSAPSSPPTVAVPPPPPPSSALKVDPNG) is disordered. Residues 164 to 178 (SSPPTVAVPPPPPPS) show a composition bias toward pro residues. An N-linked (GlcNAc...) asparagine glycan is attached at Asn333. The 315-residue stretch at 340–654 (MWYLNRGGGL…YGLMDAAEMV (315 aa)) folds into the Peptidase S8 domain. Catalysis depends on charge relay system residues Asp372 and His413. Asn426 is a glycosylation site (N-linked (GlcNAc...) asparagine). Cystine bridges form between Cys430/Cys579 and Cys522/Cys552. Ser587 acts as the Charge relay system in catalysis. N-linked (GlcNAc...) asparagine glycosylation occurs at Asn606. The P/Homo B domain occupies 662-791 (AVPEQQRCEI…DMIFYGTETP (130 aa)). A disulfide bridge connects residues Cys669 and Cys695. Asn727 and Asn859 each carry an N-linked (GlcNAc...) asparagine glycan. The segment at 886–915 (EEDEQDDEVTRGPVNPYSSSPMDHSLLMSN) is disordered. Residues 901–915 (PYSSSPMDHSLLMSN) are compositionally biased toward polar residues. Asn978 carries N-linked (GlcNAc...) asparagine glycosylation. A helical membrane pass occupies residues 1014-1034 (TVLLLVSVIFTLMGVAVAGGI).

Belongs to the peptidase S8 family. Furin subfamily. Ca(2+) serves as cofactor. In terms of tissue distribution, in adults, isoform 1-CRR is expressed in CNS, fat body, and female reproductive tissues, and in embryos, in anal pads, hindgut, developing antennomaxillary complex, oenocytes, clipeolabrum, pharynx, trachea, CNS and developing posterior spiracles.

It is found in the golgi apparatus membrane. It carries out the reaction Release of mature proteins from their proproteins by cleavage of -Arg-Xaa-Yaa-Arg-|-Zaa- bonds, where Xaa can be any amino acid and Yaa is Arg or Lys. Releases albumin, complement component C3 and von Willebrand factor from their respective precursors.. Furin is likely to represent the ubiquitous endoprotease activity within constitutive secretory pathways and capable of cleavage at the RX(K/R)R consensus motif. The chain is Furin-like protease 1, isoform 1-CRR (Fur1) from Drosophila melanogaster (Fruit fly).